The chain runs to 122 residues: Early nodulin-10 (122 aa).

An N-terminal signal peptide occupies residues 1-36; it reads MTCTLKSPPKMASFFLSSLVLMFIAALILLPQGLAA. A run of 10 repeats spans residues 45–49, 51–55, 58–62, 68–72, 77–81, 82–86, 88–92, 99–103, 106–110, and 113–117. The tract at residues 45 to 117 is 10 X 5 AA approximate repeats of P-P-X-X-X; it reads PPDSELPPYR…FYKQAPPSQK (73 aa). Positions 90-122 are disordered; it reads TYKPSKKRLPPPFQKLPPFYKQAPPSQKLPRVN.

As to expression, root nodules. In early nodules, expressed only in the interior of the developing nodule with no expression in other nodule tissues, including meristem. In slightly older nodules, expressed in almost all cells of the central zone. In more mature nodules, expression is restricted to the invasion zone.

The polypeptide is Early nodulin-10 (ENOD10) (Medicago sativa (Alfalfa)).